A 201-amino-acid polypeptide reads, in one-letter code: ADP-ribosylation factor-related protein 1 (201 aa).

Methionine 1 is subject to N-acetylmethionine. GTP-binding positions include 24 to 31, 75 to 79, and 134 to 137; these read GLDNAGKT, DLGGQ, and NKQD.

This sequence belongs to the small GTPase superfamily. Arf family. As to quaternary structure, interacts with SYS1.

The protein resides in the golgi apparatus. Its subcellular location is the trans-Golgi network. In terms of biological role, trans-Golgi-associated GTPase that regulates protein sorting. Controls the targeting of ARL1 and its effector to the trans-Golgi. Required for the lipidation of chylomicrons in the intestine and required for VLDL lipidation in the liver. The sequence is that of ADP-ribosylation factor-related protein 1 (ARFRP1) from Bos taurus (Bovine).